The chain runs to 905 residues: Toll-like receptor 3 (905 aa).

The first 25 residues, 1-25 (MKGCSSYLMYSFGGLLSLWILLVSS), serve as a signal peptide directing secretion. The 27-residue stretch at 26–52 (TNQCTVRYNVADCSHLKLTHIPDDLPS) folds into the LRRNT domain. Topologically, residues 26–705 (TNQCTVRYNV…SCKDSAPFEL (680 aa)) are lumenal. Cysteine 29 and cysteine 38 are disulfide-bonded. N-linked (GlcNAc...) asparagine glycans are attached at residues asparagine 53, asparagine 58, and asparagine 71. LRR repeat units follow at residues 53 to 74 (NITV…NFTR), 77 to 98 (QLAI…LCQI), 101 to 122 (LLKV…TFVF), 125 to 146 (NLTE…PFKN), 149 to 170 (NLIK…TGVQ), and 173 to 196 (NLQE…EFLG). Cysteine 96 and cysteine 123 are joined by a disulfide. Asparagine 125 carries an N-linked (GlcNAc...) asparagine glycan. Asparagine 197 is a glycosylation site (N-linked (GlcNAc...) asparagine). Residues 199-220 (SLRKLDLSSNPLKEFSPGCFQT) form an LRR 7 repeat. 4 N-linked (GlcNAc...) asparagine glycosylation sites follow: asparagine 248, asparagine 253, asparagine 276, and asparagine 292. 15 LRR repeats span residues 250–271 (SIQN…TFSG), 276–297 (NLTQ…SFSY), 300–321 (SLRY…SFYG), 324–345 (NLRY…ASHP), 357–378 (YLEY…TFTG), 381–401 (SLKY…TNET), 409–430 (PLLT…TFSW), 433–454 (QLRI…QEWR), 458–479 (NIFE…SFAL), 482–502 (SLQR…SPSP), 508–529 (NLTI…LLEG), 532–553 (NLEI…ANPG), 564–585 (HLHI…VFKN), 588–609 (ELKS…IFDD), and 612–633 (SLRS…VFGP). Asparagine 399, asparagine 414, and asparagine 425 each carry an N-linked (GlcNAc...) asparagine glycan. Asparagine 508 is a glycosylation site (N-linked (GlcNAc...) asparagine). An LRRCT domain is found at 646–699 (NPFDCTCESISWFVNWINQTHTNISELSTHYLCNTPHHYYGFPLKLFDTSSCKD). Intrachain disulfides connect cysteine 650/cysteine 678 and cysteine 652/cysteine 697. 2 N-linked (GlcNAc...) asparagine glycosylation sites follow: asparagine 663 and asparagine 668. A helical membrane pass occupies residues 706–726 (LFIISTSMLLVFILVVLLIHI). The Cytoplasmic portion of the chain corresponds to 727–905 (EGWRISFYWN…VALGSRNSAH (179 aa)). In terms of domain architecture, TIR spans 755 to 898 (FEYTAYIIHA…AFHHKLQVAL (144 aa)). Tyrosine 760 is modified (phosphotyrosine). Glycyl lysine isopeptide (Lys-Gly) (interchain with G-Cter in ubiquitin) cross-links involve residues lysine 766, lysine 813, and lysine 832. Phosphotyrosine is present on tyrosine 859.

This sequence belongs to the Toll-like receptor family. As to quaternary structure, monomer and homodimer; dimerization is triggered by ligand-binding, the signaling unit is composed of one ds-RNA of around 40 bp and two TLR3 molecules, and lateral clustering of signaling units along the length of the ds-RNA ligand is required for TLR3 signal transduction. Interacts (via transmembrane domain) with UNC93B1; the interaction is required for transport from the ER to the endosomes. Interacts with SRC; upon binding of double-stranded RNA. Interacts with TICAM1 (via the TIR domain) in response to poly(I:C) and this interaction is enhanced in the presence of WDFY1. The tyrosine-phosphorylated form (via TIR domain) interacts with WDFY1 (via WD repeat 2) in response to poly(I:C). Ubiquitinated by RNF170 at Lys-766 via 'Lys-48'-linked ubiquitin chains; leading to TLR3 proteasomal degradation. In terms of processing, TLR3 signaling requires a proteolytic cleavage mediated by cathepsins CTSB and CTSH, the cleavage occurs between amino acids 252 and 346. The cleaved form of TLR3 is the predominant form found in endosomes. Post-translationally, ubiquitinated by TRIM3; leading to recognition and sorting of polyubiquitinated TLR3 by the ESCRT complexes. Ubiquitinated by ZNRF1 via 'Lys-63'-linked ubiquitin chains; leading to TLR3 lysosomal trafficking and degradation. In terms of tissue distribution, highly expressed in lung. After intraperitoneal injection of lipopolysaccharide, highly expressed in brain, heart, kidney, liver, lung and spleen.

It localises to the endoplasmic reticulum membrane. The protein localises to the endosome membrane. The protein resides in the early endosome. Functionally, key component of innate and adaptive immunity. TLRs (Toll-like receptors) control host immune response against pathogens through recognition of molecular patterns specific to microorganisms. TLR3 is a nucleotide-sensing TLR which is activated by double-stranded RNA, a sign of viral infection. Acts via the adapter TRIF/TICAM1, leading to NF-kappa-B activation, IRF3 nuclear translocation, cytokine secretion and the inflammatory response. In Mus musculus (Mouse), this protein is Toll-like receptor 3.